Reading from the N-terminus, the 195-residue chain is UPF0314 protein RHE_CH03951 (195 aa).

The next 4 membrane-spanning stretches (helical) occupy residues 14–34 (AFWF…EYLM), 64–84 (WYTP…YLIL), 128–148 (DSIL…FFAA), and 150–170 (APVA…GYVI).

This sequence belongs to the UPF0314 family.

The protein resides in the cell membrane. This chain is UPF0314 protein RHE_CH03951, found in Rhizobium etli (strain ATCC 51251 / DSM 11541 / JCM 21823 / NBRC 15573 / CFN 42).